Here is a 295-residue protein sequence, read N- to C-terminus: Small ribosomal subunit protein uS2 (295 aa).

The segment at 232 to 295 is disordered; it reads RRRGTDEKPE…DEQPAAAAAE (64 aa). Positions 252–287 are enriched in basic and acidic residues; sequence EWERELLEEPKKSDEQPAKSDELPVKTDEQPTKSDE.

It belongs to the universal ribosomal protein uS2 family.

This chain is Small ribosomal subunit protein uS2, found in Salinispora tropica (strain ATCC BAA-916 / DSM 44818 / JCM 13857 / NBRC 105044 / CNB-440).